The sequence spans 160 residues: 6,7-dimethyl-8-ribityllumazine synthase (160 aa).

5-amino-6-(D-ribitylamino)uracil is bound by residues Phe22, 57 to 59, and 81 to 83; these read TYE and TII. Residue 86-87 coordinates (2S)-2-hydroxy-3-oxobutyl phosphate; it reads QT. His89 (proton donor) is an active-site residue. Leu114 serves as a coordination point for 5-amino-6-(D-ribitylamino)uracil. Position 128 (Arg128) interacts with (2S)-2-hydroxy-3-oxobutyl phosphate.

It belongs to the DMRL synthase family. Forms an icosahedral capsid composed of 60 subunits, arranged as a dodecamer of pentamers.

The catalysed reaction is (2S)-2-hydroxy-3-oxobutyl phosphate + 5-amino-6-(D-ribitylamino)uracil = 6,7-dimethyl-8-(1-D-ribityl)lumazine + phosphate + 2 H2O + H(+). The protein operates within cofactor biosynthesis; riboflavin biosynthesis; riboflavin from 2-hydroxy-3-oxobutyl phosphate and 5-amino-6-(D-ribitylamino)uracil: step 1/2. Functionally, catalyzes the formation of 6,7-dimethyl-8-ribityllumazine by condensation of 5-amino-6-(D-ribitylamino)uracil with 3,4-dihydroxy-2-butanone 4-phosphate. This is the penultimate step in the biosynthesis of riboflavin. The chain is 6,7-dimethyl-8-ribityllumazine synthase from Buchnera aphidicola subsp. Acyrthosiphon pisum (strain APS) (Acyrthosiphon pisum symbiotic bacterium).